A 165-amino-acid chain; its full sequence is Phosphopantetheine adenylyltransferase (165 aa).

Substrate is bound at residue Ser10. Residues 10-11 (SF) and His18 each bind ATP. Residues Lys42, Leu74, and Arg88 each coordinate substrate. ATP is bound by residues 89–91 (GLR), Glu99, and 124–130 (YSFLSSS).

The protein belongs to the bacterial CoaD family. As to quaternary structure, homohexamer. Mg(2+) serves as cofactor.

The protein resides in the cytoplasm. The enzyme catalyses (R)-4'-phosphopantetheine + ATP + H(+) = 3'-dephospho-CoA + diphosphate. It functions in the pathway cofactor biosynthesis; coenzyme A biosynthesis; CoA from (R)-pantothenate: step 4/5. In terms of biological role, reversibly transfers an adenylyl group from ATP to 4'-phosphopantetheine, yielding dephospho-CoA (dPCoA) and pyrophosphate. This is Phosphopantetheine adenylyltransferase from Anoxybacillus flavithermus (strain DSM 21510 / WK1).